A 376-amino-acid polypeptide reads, in one-letter code: MTIATKVNTNKKDLDTIKVPELPSVAAVKAAIPEHCFVKDPLTSISYLIKDYVLLAGLYFAVPYIEHYLGWIGLLGWYWAMGIVGSALFCVGHDCGHGSFSDYEWLNDLCGHLAHAPILAPFWPWQKSHRQHHQYTSHVEKDKGHPWVTEEDYNNRTAIEKYFAVIPISGWLRWNPIYTIVGLPDGSHFWPWSRLFETTEDRVKCAVSGVACAICAYIAFVLCDYSVYTFVKYYYIPLLFQGLILVIITYLQHQNEDIEVYEADEWGFVRGQTQTIDRHWGFGLDNIMHNITNGHVAHHFFFTKIPHYHLLEATPAIKKALEPLKDTQYGYKREVNYNWFFKYLHYNVTLDYLTHKAKGVLQYRSGVEAAKAKKAQ.

4 helical membrane passes run 45 to 65 (ISYLIKDYVLLAGLYFAVPYI), 69 to 89 (LGWIGLLGWYWAMGIVGSALF), 203 to 223 (VKCAVSGVACAICAYIAFVLC), and 228 to 248 (YTFVKYYYIPLLFQGLILVII).

This sequence belongs to the fatty acid desaturase type 1 family.

It is found in the membrane. It carries out the reaction (9Z)-octadecenoyl-CoA + 2 Fe(II)-[cytochrome b5] + O2 + 2 H(+) = (9Z,12Z)-octadecadienoyl-CoA + 2 Fe(III)-[cytochrome b5] + 2 H2O. The catalysed reaction is (9Z)-hexadecenoyl-CoA + 2 Fe(II)-[cytochrome b5] + O2 + 2 H(+) = (9Z,12Z)-hexadecadienoyl-CoA + 2 Fe(III)-[cytochrome b5] + 2 H2O. It catalyses the reaction (9Z,12Z)-octadecadienoyl-CoA + 2 Fe(II)-[cytochrome b5] + O2 + 2 H(+) = (9Z,12Z,15Z)-octadecatrienoyl-CoA + 2 Fe(III)-[cytochrome b5] + 2 H2O. The enzyme catalyses (9Z)-heptadecenoyl-CoA + 2 Fe(II)-[cytochrome b5] + O2 + 2 H(+) = (9Z,12Z)-heptadecadienoyl-CoA + 2 Fe(III)-[cytochrome b5] + 2 H2O. It carries out the reaction (9Z)-pentadecenoyl-CoA + 2 Fe(II)-[cytochrome b5] + O2 + 2 H(+) = (9Z,12Z)-pentadecadienoyl-CoA + 2 Fe(III)-[cytochrome b5] + 2 H2O. The catalysed reaction is (6Z,9Z,12Z)-octadecatrienoyl-CoA + 2 Fe(II)-[cytochrome b5] + O2 + 2 H(+) = (6Z,9Z,12Z,15Z)-octadecatetraenoyl-CoA + 2 Fe(III)-[cytochrome b5] + 2 H2O. It catalyses the reaction (9Z)-tetradecenoyl-CoA + 2 Fe(II)-[cytochrome b5] + O2 + 2 H(+) = (9Z,12Z)-tetradecadienoyl-CoA + 2 Fe(III)-[cytochrome b5] + 2 H2O. Its pathway is lipid metabolism; polyunsaturated fatty acid biosynthesis. Can function as a Delta(12)/Delta(15) bifunctional desaturase and behaves as a nu +3' desaturase. Introduces a double bond in the fatty acid chain three carbons away from an existing double bond to biosynthesize polyunsaturated fatty acids (PUFAs) endogenously (PUFAs are essential for membrane structure and many cellular and physiological processes). Acts on a number of substrates like oleoyl-CoA ((9Z)-octadecenoyl-CoA, 18:1n-9), palmitoleoyl-CoA ((9Z)-hexadecenoyl-CoA, 16:1n-7), and gamma-linolenoyl-CoA ((6Z,9Z,12Z)-octadecatrienoyl-CoA, 18:3n-6), to generate linoleoyl-CoA ((9Z,12Z)-octadecadienoyl-CoA, 18:2n-6), (9Z,12Z)-hexadecadienoyl-CoA (16:2n-4) and (6Z,9Z,12Z,15Z)-octadecatetraenoyl-CoA (18:4n-3) respectively. Unlike plants, Caenorhabditis elegans desaturases seem to use fatty acyl-CoAs as substrates. This chain is Delta(12) fatty acid desaturase fat-2 (fat-2), found in Caenorhabditis elegans.